A 228-amino-acid chain; its full sequence is 3,4-dihydroxy-2-butanone 4-phosphate synthase (228 aa).

D-ribulose 5-phosphate is bound by residues 37–38, aspartate 42, 150–154, and glutamate 174; these read RE and RRGHT. Mg(2+) is bound at residue glutamate 38. Histidine 153 serves as a coordination point for Mg(2+).

The protein belongs to the DHBP synthase family. In terms of assembly, homodimer. Mg(2+) serves as cofactor. Mn(2+) is required as a cofactor.

The enzyme catalyses D-ribulose 5-phosphate = (2S)-2-hydroxy-3-oxobutyl phosphate + formate + H(+). Its pathway is cofactor biosynthesis; riboflavin biosynthesis; 2-hydroxy-3-oxobutyl phosphate from D-ribulose 5-phosphate: step 1/1. In terms of biological role, catalyzes the conversion of D-ribulose 5-phosphate to formate and 3,4-dihydroxy-2-butanone 4-phosphate. The sequence is that of 3,4-dihydroxy-2-butanone 4-phosphate synthase from Photobacterium profundum (strain SS9).